The primary structure comprises 258 residues: Undecaprenyl-diphosphatase (258 aa).

Transmembrane regions (helical) follow at residues 1–21 (MDFL…FLPV), 42–62 (LKCF…FMFF), 69–89 (FNLW…GFLA), 96–116 (FFEP…FIVV), 135–155 (VSFK…IPGT), 173–193 (EVAA…ATAY), 211–231 (IFLV…KLFL), and 237–257 (FSYI…LIYI).

It belongs to the UppP family.

The protein localises to the cell inner membrane. The catalysed reaction is di-trans,octa-cis-undecaprenyl diphosphate + H2O = di-trans,octa-cis-undecaprenyl phosphate + phosphate + H(+). Functionally, catalyzes the dephosphorylation of undecaprenyl diphosphate (UPP). Confers resistance to bacitracin. This chain is Undecaprenyl-diphosphatase, found in Campylobacter fetus subsp. fetus (strain 82-40).